A 452-amino-acid chain; its full sequence is tRNA-2-methylthio-N(6)-dimethylallyladenosine synthase (452 aa).

The MTTase N-terminal domain occupies 3-118; the sequence is KKVFIKTYGC…LPQLLAERER (116 aa). The [4Fe-4S] cluster site is built by C12, C49, C81, C155, C159, and C162. One can recognise a Radical SAM core domain in the interval 141-379; that stretch reads RVEGASAFVS…QTVINDSIKR (239 aa). The TRAM domain maps to 382–445; sequence ESRLGTVQRI…SFTLRGEVVT (64 aa).

Belongs to the methylthiotransferase family. MiaB subfamily. Monomer. Requires [4Fe-4S] cluster as cofactor.

The protein resides in the cytoplasm. The enzyme catalyses N(6)-dimethylallyladenosine(37) in tRNA + (sulfur carrier)-SH + AH2 + 2 S-adenosyl-L-methionine = 2-methylsulfanyl-N(6)-dimethylallyladenosine(37) in tRNA + (sulfur carrier)-H + 5'-deoxyadenosine + L-methionine + A + S-adenosyl-L-homocysteine + 2 H(+). Its function is as follows. Catalyzes the methylthiolation of N6-(dimethylallyl)adenosine (i(6)A), leading to the formation of 2-methylthio-N6-(dimethylallyl)adenosine (ms(2)i(6)A) at position 37 in tRNAs that read codons beginning with uridine. This chain is tRNA-2-methylthio-N(6)-dimethylallyladenosine synthase, found in Albidiferax ferrireducens (strain ATCC BAA-621 / DSM 15236 / T118) (Rhodoferax ferrireducens).